The primary structure comprises 259 residues: UDP-2,3-diacylglucosamine hydrolase (259 aa).

5 residues coordinate Mn(2+): aspartate 8, histidine 10, aspartate 41, asparagine 79, and histidine 114. 79–80 (NR) lines the substrate pocket. Aspartate 122, serine 160, asparagine 164, lysine 167, and histidine 195 together coordinate substrate. Residues histidine 195 and histidine 197 each contribute to the Mn(2+) site.

This sequence belongs to the LpxH family. Requires Mn(2+) as cofactor.

Its subcellular location is the cell inner membrane. The enzyme catalyses UDP-2-N,3-O-bis[(3R)-3-hydroxytetradecanoyl]-alpha-D-glucosamine + H2O = 2-N,3-O-bis[(3R)-3-hydroxytetradecanoyl]-alpha-D-glucosaminyl 1-phosphate + UMP + 2 H(+). It functions in the pathway glycolipid biosynthesis; lipid IV(A) biosynthesis; lipid IV(A) from (3R)-3-hydroxytetradecanoyl-[acyl-carrier-protein] and UDP-N-acetyl-alpha-D-glucosamine: step 4/6. In terms of biological role, hydrolyzes the pyrophosphate bond of UDP-2,3-diacylglucosamine to yield 2,3-diacylglucosamine 1-phosphate (lipid X) and UMP by catalyzing the attack of water at the alpha-P atom. Involved in the biosynthesis of lipid A, a phosphorylated glycolipid that anchors the lipopolysaccharide to the outer membrane of the cell. In Edwardsiella ictaluri (strain 93-146), this protein is UDP-2,3-diacylglucosamine hydrolase.